The primary structure comprises 335 residues: Phosphoserine phosphatase RsbU (335 aa).

Residues 123–333 (DIGAISVPAK…DDFTLIVLRR (211 aa)) enclose the PPM-type phosphatase domain.

The catalysed reaction is O-phospho-L-serine + H2O = L-serine + phosphate. It catalyses the reaction O-phospho-D-serine + H2O = D-serine + phosphate. With respect to regulation, stimulated by a long-lived interaction with RsbT. Its function is as follows. Positive regulator of sigma-B activity. Dephosphorylates RsbV in response to environmental stress conveyed from the RsbXST module. This is Phosphoserine phosphatase RsbU (rsbU) from Bacillus subtilis (strain 168).